The chain runs to 370 residues: Uroporphyrinogen decarboxylase (370 aa).

Residues 29–33, D79, Y155, S210, and H342 contribute to the substrate site; that span reads RQAGR.

The protein belongs to the uroporphyrinogen decarboxylase family. As to quaternary structure, homodimer.

The protein resides in the cytoplasm. The enzyme catalyses uroporphyrinogen III + 4 H(+) = coproporphyrinogen III + 4 CO2. It participates in porphyrin-containing compound metabolism; protoporphyrin-IX biosynthesis; coproporphyrinogen-III from 5-aminolevulinate: step 4/4. Its function is as follows. Catalyzes the decarboxylation of four acetate groups of uroporphyrinogen-III to yield coproporphyrinogen-III. The chain is Uroporphyrinogen decarboxylase from Acidovorax ebreus (strain TPSY) (Diaphorobacter sp. (strain TPSY)).